The following is a 454-amino-acid chain: Tubulin alpha-A chain (454 aa).

8 residues coordinate GTP: Gln12, Asp72, Ser141, Gly145, Thr146, Thr180, Asn207, and Asn229. A Mg(2+)-binding site is contributed by Asp72. Glu255 is an active-site residue.

This sequence belongs to the tubulin family. Dimer of alpha and beta chains. A typical microtubule is a hollow water-filled tube with an outer diameter of 25 nm and an inner diameter of 15 nM. Alpha-beta heterodimers associate head-to-tail to form protofilaments running lengthwise along the microtubule wall with the beta-tubulin subunit facing the microtubule plus end conferring a structural polarity. Microtubules usually have 13 protofilaments but different protofilament numbers can be found in some organisms and specialized cells. The cofactor is Mg(2+).

Its subcellular location is the cytoplasm. It is found in the cytoskeleton. The catalysed reaction is GTP + H2O = GDP + phosphate + H(+). In terms of biological role, tubulin is the major constituent of microtubules, a cylinder consisting of laterally associated linear protofilaments composed of alpha- and beta-tubulin heterodimers. Microtubules grow by the addition of GTP-tubulin dimers to the microtubule end, where a stabilizing cap forms. Below the cap, tubulin dimers are in GDP-bound state, owing to GTPase activity of alpha-tubulin. This Neurospora crassa (strain ATCC 24698 / 74-OR23-1A / CBS 708.71 / DSM 1257 / FGSC 987) protein is Tubulin alpha-A chain (tba-1).